Reading from the N-terminus, the 596-residue chain is Putative terpene synthase 2, chloroplastic (596 aa).

The N-terminal 46 residues, 1 to 46 (MATLSMQVSTLSKQVKNLNTFGMGSASKLPMVARRVSTTRLRPICS), are a transit peptide targeting the chloroplast. Residues aspartate 349 and aspartate 353 each coordinate Mn(2+). A DDXXD motif motif is present at residues 349-353 (DDVYD). 2 homodimerization regions span residues 355–361 (YGTLDEL) and 427–464 (EAKW…FTLP). Positions 493 and 501 each coordinate Mn(2+).

It belongs to the terpene synthase family. As to quaternary structure, homodimer. The cofactor is Mn(2+). It depends on Mg(2+) as a cofactor.

Its subcellular location is the plastid. It localises to the chloroplast. It participates in secondary metabolite biosynthesis; terpenoid biosynthesis. In terms of biological role, putative monoterpene synthase inactive on geranyl diphosphate (GPP). This chain is Putative terpene synthase 2, chloroplastic, found in Thymus vulgaris (Thyme).